The sequence spans 220 residues: Riboflavin kinase (220 aa).

The tract at residues 1-92 is H-T-H motif-like; sequence MDTSDQYYRA…LSRILSIKSN (92 aa). Residues 93-220 are riboflavin kinase; it reads IVMTGIVVPG…GDEVTIEVTA (128 aa). 102–107 serves as a coordination point for CDP; that stretch reads GMGEGK. Thr131 and Asn133 together coordinate Mg(2+). FMN-binding residues include Thr188 and Glu195. A CDP-binding site is contributed by 200–203; that stretch reads KYLR.

This sequence belongs to the archaeal riboflavin kinase family. Requires Mg(2+) as cofactor.

The enzyme catalyses riboflavin + CTP = CDP + FMN + H(+). It functions in the pathway cofactor biosynthesis; FMN biosynthesis; FMN from riboflavin (CTP route): step 1/1. Functionally, catalyzes the CTP-dependent phosphorylation of riboflavin (vitamin B2) to form flavin mononucleotide (FMN). The chain is Riboflavin kinase (ribK) from Thermoplasma volcanium (strain ATCC 51530 / DSM 4299 / JCM 9571 / NBRC 15438 / GSS1).